We begin with the raw amino-acid sequence, 1939 residues long: Myosin-4 (1939 aa).

The region spanning 33–82 is the Myosin N-terminal SH3-like domain; the sequence is DAKSSVFVVDAKESYVKATVQSREGGKVTAKTEGGATVTVKDDQVFSMNP. A Phosphoserine modification is found at S36. 2 positions are modified to phosphothreonine: T64 and T69. S79 is subject to Phosphoserine. The Myosin motor domain occupies 86–782; the sequence is DKIEDMAMMT…LLGTLEEMRD (697 aa). K130 carries the N6,N6,N6-trimethyllysine modification. 179 to 186 is a binding site for ATP; the sequence is GESGAGKT. Y389 is modified (phosphotyrosine). Position 391 is a phosphothreonine (T391). S392 is subject to Phosphoserine. Phosphothreonine is present on T419. Y424 carries the post-translational modification Phosphotyrosine. The residue at position 625 (S625) is a Phosphoserine. The tract at residues 659-681 is actin-binding; that stretch reads LNKLMTNLKSTHPHFVRCLIPNE. H757 bears the Pros-methylhistidine mark. Residues 761–775 are actin-binding; that stretch reads KFGHTKVFFKAGLLG. T776 is subject to Phosphothreonine. The IQ domain occupies 785–814; it reads LAQLITRTQAVCRGYLMRVEFKKMMERRES. The stretch at 843–1939 forms a coiled coil; sequence LLKSAETEKE…EVHTKVISEE (1097 aa). Phosphoserine occurs at positions 1092 and 1096. Disordered regions lie at residues 1128–1147 and 1153–1172; these read AERASRAKAEKQRSDLSREL and RLEEAGGATSAQIEMNKKRE. 2 positions are modified to phosphoserine: S1162 and S1237. A Phosphothreonine modification is found at T1241. S1243 is modified (phosphoserine). T1255 carries the phosphothreonine modification. Phosphoserine is present on S1261. Phosphothreonine is present on T1265. Positions 1276-1299 are disordered; the sequence is ELSTQKARLHTESGEFSRQLDEKD. The residue at position 1278 (S1278) is a Phosphoserine. Residues 1284-1299 are compositionally biased toward basic and acidic residues; sequence LHTESGEFSRQLDEKD. T1286 carries the post-translational modification Phosphothreonine. A phosphoserine mark is found at S1288, S1292, S1303, S1306, and S1413. At Y1464 the chain carries Phosphotyrosine. The residue at position 1467 (T1467) is a Phosphothreonine. Position 1474 is a phosphoserine (S1474). Y1492 carries the post-translational modification Phosphotyrosine. S1495 is subject to Phosphoserine. Residue T1501 is modified to Phosphothreonine. A Phosphoserine modification is found at S1514. T1517 is subject to Phosphothreonine. Residues S1542, S1547, S1554, S1574, S1600, S1603, S1714, and S1726 each carry the phosphoserine modification. T1730 and T1736 each carry phosphothreonine. A Phosphoserine modification is found at S1739.

This sequence belongs to the TRAFAC class myosin-kinesin ATPase superfamily. Myosin family. Muscle myosin is a hexameric protein that consists of 2 heavy chain subunits (MHC), 2 alkali light chain subunits (MLC) and 2 regulatory light chain subunits (MLC-2). Expressed in type 2b myofibers in the tibialis anterior muscle (at protein level).

The protein resides in the cytoplasm. It is found in the myofibril. In terms of biological role, muscle contraction. This chain is Myosin-4 (Myh4), found in Mus musculus (Mouse).